Consider the following 269-residue polypeptide: Shikimate dehydrogenase (NADP(+)) (269 aa).

Shikimate contacts are provided by residues 17–19 (SKS) and Thr64. The active-site Proton acceptor is Lys68. An NADP(+)-binding site is contributed by Glu80. The shikimate site is built by Asn89 and Asp105. NADP(+)-binding positions include 130–134 (GAGGA), 154–159 (NRTRAK), and Met213. Shikimate is bound at residue Tyr215. Gly237 is an NADP(+) binding site.

This sequence belongs to the shikimate dehydrogenase family. Homodimer.

It catalyses the reaction shikimate + NADP(+) = 3-dehydroshikimate + NADPH + H(+). It participates in metabolic intermediate biosynthesis; chorismate biosynthesis; chorismate from D-erythrose 4-phosphate and phosphoenolpyruvate: step 4/7. Involved in the biosynthesis of the chorismate, which leads to the biosynthesis of aromatic amino acids. Catalyzes the reversible NADPH linked reduction of 3-dehydroshikimate (DHSA) to yield shikimate (SA). This Neisseria meningitidis serogroup B (strain ATCC BAA-335 / MC58) protein is Shikimate dehydrogenase (NADP(+)).